The sequence spans 269 residues: Putative pyruvate, phosphate dikinase regulatory protein (269 aa).

Residue 151–158 (GVSRSSKT) participates in ADP binding.

This sequence belongs to the pyruvate, phosphate/water dikinase regulatory protein family. PDRP subfamily.

The enzyme catalyses N(tele)-phospho-L-histidyl/L-threonyl-[pyruvate, phosphate dikinase] + ADP = N(tele)-phospho-L-histidyl/O-phospho-L-threonyl-[pyruvate, phosphate dikinase] + AMP + H(+). It catalyses the reaction N(tele)-phospho-L-histidyl/O-phospho-L-threonyl-[pyruvate, phosphate dikinase] + phosphate + H(+) = N(tele)-phospho-L-histidyl/L-threonyl-[pyruvate, phosphate dikinase] + diphosphate. Its function is as follows. Bifunctional serine/threonine kinase and phosphorylase involved in the regulation of the pyruvate, phosphate dikinase (PPDK) by catalyzing its phosphorylation/dephosphorylation. The chain is Putative pyruvate, phosphate dikinase regulatory protein from Geobacter sulfurreducens (strain ATCC 51573 / DSM 12127 / PCA).